We begin with the raw amino-acid sequence, 423 residues long: Myb-like protein G (423 aa).

Residues 36-90 (TISKQRENWTDEEHQKFLEALTLFDRDWKKIESFVGSKTVIQIRSHAQKYFIKVQ) enclose the HTH myb-type domain. The H-T-H motif DNA-binding region spans 63-86 (WKKIESFVGSKTVIQIRSHAQKYF). 3 disordered regions span residues 93–116 (NTGE…QKQK), 177–205 (QQAV…GTTL), and 284–372 (ISPR…LGNY). Positions 177–202 (QQAVTTAQSSQRNGGLPPNPSSNNGG) are enriched in low complexity. Residues 286 to 295 (PRNSTGNINV) show a composition bias toward polar residues. Over residues 302–354 (NNSNNNNNNNNNNNNNNNNNNNNNNNNNNNNNNNNNNNNNNNNNNNNNNNNNN) the composition is skewed to low complexity. Residues 361-372 (QNHSNMVNLGNY) are compositionally biased toward polar residues.

The protein resides in the nucleus. This Dictyostelium discoideum (Social amoeba) protein is Myb-like protein G (mybG).